The sequence spans 229 residues: UPF0319 protein Sbal223_2728 (229 aa).

An N-terminal signal peptide occupies residues 1–21 (MKSLLPISSLLVLLGSASAFA).

The protein belongs to the UPF0319 family.

This Shewanella baltica (strain OS223) protein is UPF0319 protein Sbal223_2728.